The following is a 234-amino-acid chain: Urease accessory protein UreG 1 (234 aa).

Residues 1 to 29 are disordered; sequence MTRTPTGVPMHLGHTHDAPAAVSADATRP. Residue 42-49 participates in GTP binding; it reads GPVGSGKT.

It belongs to the SIMIBI class G3E GTPase family. UreG subfamily. In terms of assembly, homodimer. UreD, UreF and UreG form a complex that acts as a GTP-hydrolysis-dependent molecular chaperone, activating the urease apoprotein by helping to assemble the nickel containing metallocenter of UreC. The UreE protein probably delivers the nickel.

It is found in the cytoplasm. Functionally, facilitates the functional incorporation of the urease nickel metallocenter. This process requires GTP hydrolysis, probably effectuated by UreG. The chain is Urease accessory protein UreG 1 from Streptomyces griseus subsp. griseus (strain JCM 4626 / CBS 651.72 / NBRC 13350 / KCC S-0626 / ISP 5235).